Consider the following 169-residue polypeptide: Secretory-abundant heat soluble protein 1 (169 aa).

Residues 1 to 19 (MSRAAVAIALLGCVVAAYG) form the signal peptide. The tract at residues 31-60 (EWTGKSWMGKWESTDRIENFDAFISALGLP) is SAHS-c1. The interval 75 to 103 (WKEGDHYHHQISVPDKNYKNDVNFKLNEE) is SAHS-c2. N-linked (GlcNAc...) asparagine glycosylation is present at N109. The tract at residues 116 to 165 (KYTEDGGNLKAEVHVPSRNKVIHDEYKVNGDELEKTYKVGDVTAKRWYKK) is SAHS-c3.

It belongs to the Secretory-abundant heat soluble protein (SAHS) family.

It is found in the secreted. Secreted heat soluble protein acting as a molecular shield in water-deficient condition. Tardigrade-specific intrinsically disordered proteins (TDPs) are essential for desiccation tolerance by forming non-crystalline amorphous solids upon desiccation, and this vitrified state mirrors their protective capabilities. This is Secretory-abundant heat soluble protein 1 from Ramazzottius varieornatus (Water bear).